The primary structure comprises 582 residues: External alternative NADH-ubiquinone oxidoreductase, mitochondrial (582 aa).

Residues 1–30 constitute a mitochondrion transit peptide; the sequence is MLRLRPAVRAVSVARSVALTRSLHVSVAKF. Residues 46 to 65 are disordered; it reads KQTAGHQGHHQEIPKPDENH. Residues 54–65 are compositionally biased toward basic and acidic residues; sequence HHQEIPKPDENH. 114 to 144 contacts FAD; that stretch reads TLVVLGSGWGSVSFLKKLDTSNYNVIVVSPR. 277–313 contacts NAD(+); sequence LHTVVVGGGPTGVEFAAELQDFFEDDLRKWIPDIRDD. Residues 454-501 adopt a coiled-coil conformation; the sequence is LLNGIAKTEDLNNEITNLEKQSEHTFDEQERKNIFAQLESKSRKLRRS.

Belongs to the NADH dehydrogenase family. FAD serves as cofactor.

It is found in the mitochondrion inner membrane. The catalysed reaction is a quinone + NADH + H(+) = a quinol + NAD(+). It carries out the reaction a ubiquinone + NADH + H(+) = a ubiquinol + NAD(+). Alternative NADH-ubiquinone oxidoreductase which catalyzes the oxidation of mitochondrial NADH does not translocate protons across the inner mitochondrial membrane. This Yarrowia lipolytica (strain CLIB 122 / E 150) (Yeast) protein is External alternative NADH-ubiquinone oxidoreductase, mitochondrial (NDH2).